The chain runs to 374 residues: Putative glutamate--cysteine ligase 2-2 (374 aa).

Belongs to the glutamate--cysteine ligase type 2 family. YbdK subfamily.

It carries out the reaction L-cysteine + L-glutamate + ATP = gamma-L-glutamyl-L-cysteine + ADP + phosphate + H(+). In terms of biological role, ATP-dependent carboxylate-amine ligase which exhibits weak glutamate--cysteine ligase activity. The chain is Putative glutamate--cysteine ligase 2-2 from Rhodococcus jostii (strain RHA1).